An 856-amino-acid chain; its full sequence is Envelope glycoprotein gp160 (856 aa).

A signal peptide spans 1 to 31 (MKVKGIQGNWQNWWKWGTLILGLVIICSAAE). Over 32 to 684 (NLWVTVYYGV…ISNWLWYIKI (653 aa)) the chain is Extracellular. C53 and C73 are disulfide-bonded. N-linked (GlcNAc...) asparagine; by host glycans are attached at residues N87, N132, N138, N152, N156, N183, and N198. 5 disulfides stabilise this stretch: C118-C206, C125-C197, C130-C153, C219-C248, and C229-C240. The segment at 130–152 (CHNITIKDNNTNVDTEMKEEIKN) is V1. A V2 region spans residues 153–197 (CSYNMTTELRDKQRKIYSLFYRLDIVPIGGNSSNGDSSKYRLINC). N242, N263, N277, N294, N302, N332, N339, N355, and N364 each carry an N-linked (GlcNAc...) asparagine; by host glycan. Positions 297–330 (CMRPNNNTRKSISIGPGRAFFATGDIIGDIRQAH) are V3. C297 and C331 are joined by a disulfide. The tract at residues 365–375 (SSGGDVEITTH) is CD4-binding loop. 2 disulfide bridges follow: C379-C445 and C386-C418. A V4 region spans residues 386 to 418 (CNTSGLFNGTWLNGTSNNTWKIDTVNDTIILPC). N-linked (GlcNAc...) asparagine; by host glycosylation is found at N387, N393, N398, N402, N411, N448, N461, N462, and N465. 2 V5 regions span residues 461–471 (NNTSNETFRPG) and 463–471 (TSNETFRPG). A fusion peptide region spans residues 512–532 (AIGMGAFFLGFLGAAGSTMGA). The immunosuppression stretch occupies residues 574–592 (KQLQARILAVERYLKDQQL). C598 and C604 form a disulfide bridge. N611, N616, and N637 each carry an N-linked (GlcNAc...) asparagine; by host glycan. Residues 633–667 (KEVSNYTQVIYNLIEESQTQQEINERDLLALDKWA) adopt a coiled-coil conformation. The segment at 662-683 (ALDKWANLWNWFDISNWLWYIK) is MPER; binding to GalCer. A helical transmembrane segment spans residues 685–705 (FIMIVGGLIGLRIVFAVLSII). The Cytoplasmic portion of the chain corresponds to 706-856 (NRVRQGYSPL…IRQGLERALL (151 aa)). The short motif at 712–715 (YSPL) is the YXXL motif; contains endocytosis signal element. The segment at 720-742 (LTHHQREPDRPERIEEGGGEQDR) is disordered. Positions 723-742 (HQREPDRPERIEEGGGEQDR) are enriched in basic and acidic residues. C764 carries the S-palmitoyl cysteine; by host lipid modification. The short motif at 855-856 (LL) is the Di-leucine internalization motif element.

It belongs to the HIV-1 env protein family. In terms of assembly, the mature envelope protein (Env) consists of a homotrimer of non-covalently associated gp120-gp41 heterodimers. The resulting complex protrudes from the virus surface as a spike. There seems to be as few as 10 spikes on the average virion. Interacts with host CD4, CCR5 and CXCR4. Gp120 also interacts with the C-type lectins CD209/DC-SIGN and CLEC4M/DC-SIGNR (collectively referred to as DC-SIGN(R)). Gp120 and gp41 interact with GalCer. Gp120 interacts with host ITGA4/ITGB7 complex; on CD4+ T-cells, this interaction results in rapid activation of integrin ITGAL/LFA-1, which facilitates efficient cell-to-cell spreading of HIV-1. Gp120 interacts with cell-associated heparan sulfate; this interaction increases virus infectivity on permissive cells and may be involved in infection of CD4- cells. The mature envelope protein (Env) consists of a homotrimer of non-covalently associated gp120-gp41 heterodimers. The resulting complex protrudes from the virus surface as a spike. There seems to be as few as 10 spikes on the average virion. In terms of processing, highly glycosylated by host. The high number of glycan on the protein is reffered to as 'glycan shield' because it contributes to hide protein sequence from adaptive immune system. Post-translationally, palmitoylation of the transmembrane protein and of Env polyprotein (prior to its proteolytic cleavage) is essential for their association with host cell membrane lipid rafts. Palmitoylation is therefore required for envelope trafficking to classical lipid rafts, but not for viral replication. Specific enzymatic cleavages in vivo yield mature proteins. Envelope glycoproteins are synthesized as an inactive precursor that is heavily N-glycosylated and processed likely by host cell furin in the Golgi to yield the mature SU and TM proteins. The cleavage site between SU and TM requires the minimal sequence [KR]-X-[KR]-R. About 2 of the 9 disulfide bonds of gp41 are reduced by P4HB/PDI, following binding to CD4 receptor.

Its subcellular location is the virion membrane. The protein resides in the host cell membrane. It is found in the host endosome membrane. In terms of biological role, oligomerizes in the host endoplasmic reticulum into predominantly trimers. In a second time, gp160 transits in the host Golgi, where glycosylation is completed. The precursor is then proteolytically cleaved in the trans-Golgi and thereby activated by cellular furin or furin-like proteases to produce gp120 and gp41. Its function is as follows. Attaches the virus to the host lymphoid cell by binding to the primary receptor CD4. This interaction induces a structural rearrangement creating a high affinity binding site for a chemokine coreceptor like CXCR4 and/or CCR5. Acts as a ligand for CD209/DC-SIGN and CLEC4M/DC-SIGNR, which are respectively found on dendritic cells (DCs), and on endothelial cells of liver sinusoids and lymph node sinuses. These interactions allow capture of viral particles at mucosal surfaces by these cells and subsequent transmission to permissive cells. HIV subverts the migration properties of dendritic cells to gain access to CD4+ T-cells in lymph nodes. Virus transmission to permissive T-cells occurs either in trans (without DCs infection, through viral capture and transmission), or in cis (following DCs productive infection, through the usual CD4-gp120 interaction), thereby inducing a robust infection. In trans infection, bound virions remain infectious over days and it is proposed that they are not degraded, but protected in non-lysosomal acidic organelles within the DCs close to the cell membrane thus contributing to the viral infectious potential during DCs' migration from the periphery to the lymphoid tissues. On arrival at lymphoid tissues, intact virions recycle back to DCs' cell surface allowing virus transmission to CD4+ T-cells. Functionally, acts as a class I viral fusion protein. Under the current model, the protein has at least 3 conformational states: pre-fusion native state, pre-hairpin intermediate state, and post-fusion hairpin state. During fusion of viral and target intracellular membranes, the coiled coil regions (heptad repeats) assume a trimer-of-hairpins structure, positioning the fusion peptide in close proximity to the C-terminal region of the ectodomain. The formation of this structure appears to drive apposition and subsequent fusion of viral and target cell membranes. Complete fusion occurs in host cell endosomes and is dynamin-dependent, however some lipid transfer might occur at the plasma membrane. The virus undergoes clathrin-dependent internalization long before endosomal fusion, thus minimizing the surface exposure of conserved viral epitopes during fusion and reducing the efficacy of inhibitors targeting these epitopes. Membranes fusion leads to delivery of the nucleocapsid into the cytoplasm. In Homo sapiens (Human), this protein is Envelope glycoprotein gp160.